A 60-amino-acid polypeptide reads, in one-letter code: Large ribosomal subunit protein uL30 (60 aa).

The protein belongs to the universal ribosomal protein uL30 family. In terms of assembly, part of the 50S ribosomal subunit.

This Lachnoclostridium phytofermentans (strain ATCC 700394 / DSM 18823 / ISDg) (Clostridium phytofermentans) protein is Large ribosomal subunit protein uL30.